Here is a 229-residue protein sequence, read N- to C-terminus: Large ribosomal subunit protein uL3 (229 aa).

At Q151 the chain carries N5-methylglutamine.

The protein belongs to the universal ribosomal protein uL3 family. As to quaternary structure, part of the 50S ribosomal subunit. Forms a cluster with proteins L14 and L19. Post-translationally, methylated by PrmB.

In terms of biological role, one of the primary rRNA binding proteins, it binds directly near the 3'-end of the 23S rRNA, where it nucleates assembly of the 50S subunit. The sequence is that of Large ribosomal subunit protein uL3 from Paramagnetospirillum magneticum (strain ATCC 700264 / AMB-1) (Magnetospirillum magneticum).